We begin with the raw amino-acid sequence, 564 residues long: Keratin, type II cytoskeletal 6C (564 aa).

Residues 1–11 (MASTSTTIRSH) are compositionally biased toward low complexity. The disordered stretch occupies residues 1 to 23 (MASTSTTIRSHSSSRRGFSANSA). At Ala-2 the chain carries N-acetylalanine. The interval 2-162 (ASTSTTIRSH…DPAIQRVRAE (161 aa)) is head. Residue Ser-60 is modified to Phosphoserine. Residues 163-198 (EREQIKTLNNKFASFIDKVRFLEQQNKVLDTKWTLL) form a coil 1A region. The IF rod domain occupies 163–476 (EREQIKTLNN…KLLEGEECRL (314 aa)). The linker 1 stretch occupies residues 199-217 (QEQGTKTVRQNLEPLFEQY). A coil 1B region spans residues 218–309 (INNLRRQLDS…ALYDAELSQM (92 aa)). The interval 310-333 (QTHISDTSVVLSMDNNRNLDLDSI) is linker 12. Residues 334-472 (IAEVKAQYEE…ATYRKLLEGE (139 aa)) are coil 2. Residues 473-564 (ECRLNGEGVG…SSSSRKSYKH (92 aa)) form a tail region.

The protein belongs to the intermediate filament family. As to quaternary structure, heterodimer of a type I and a type II keratin. KRT6 isomers associate with KRT16 and/or KRT17. Constitutively expressed in distinct types of epithelia such as those in oral mucosa, esophagus, papillae of tongue and hair follicle outer root sheath.

This chain is Keratin, type II cytoskeletal 6C (KRT6C), found in Homo sapiens (Human).